The sequence spans 74 residues: MASSTVPVSAAGSANETPEIPDNVGDWLRGVYRFATDRNDFRRNLILNLGLFAAGVWLARNLSDIDLMAPQPGV.

Polar residues predominate over residues 1–16 (MASSTVPVSAAGSANE). A disordered region spans residues 1–22 (MASSTVPVSAAGSANETPEIPD). Ala-2 carries the post-translational modification N-acetylalanine.

Belongs to the Tom6 family. As to quaternary structure, forms part of the preprotein translocase complex of the outer mitochondrial membrane (TOM complex) which consists of at least 7 different proteins (TOMM5, TOMM6, TOMM7, TOMM20, TOMM22, TOMM40 and TOMM70).

Its subcellular location is the mitochondrion outer membrane. The sequence is that of Mitochondrial import receptor subunit TOM6 homolog (TOMM6) from Homo sapiens (Human).